Here is a 276-residue protein sequence, read N- to C-terminus: F-box/LRR-repeat protein 20 (276 aa).

The region spanning 22 to 68 (AVINKKLPKELLLRIFSFLDVVTLCRCAQVSRAWNVLALDGSNWQRI) is the F-box domain. LRR repeat units follow at residues 74-100 (QRDIEGRVVENISKRCGGFLRKLSLRG), 101-126 (CLGVGDNALRTFAQNCRNIEVLSLNG), 127-152 (CTKTTDATCTSLSKFCSKLRHLDLAS), 153-178 (CTSITNMSLKALSEGCPLLEQLNISW), 179-204 (CDQVTKDGIQALVRGCGGLKALFLKG), 205-230 (CTQLEDEALKYIGAHCPELVTLNLQT), 231-256 (CLQITDEGLITICRGCHKLQSLCASG), and 257-276 (CSNITDAILNALGQNCPRLR).

In terms of assembly, interacts with SKP1 and CUL1. As to expression, widely expressed, with highest expression in skeletal muscle, heart and brain.

The protein localises to the cytoplasm. In terms of biological role, substrate-recognition component of the SCF (SKP1-CUL1-F-box protein)-type E3 ubiquitin ligase complex. Role in neural transmission. In Rattus norvegicus (Rat), this protein is F-box/LRR-repeat protein 20 (Fbxl20).